A 354-amino-acid polypeptide reads, in one-letter code: Uroporphyrinogen decarboxylase (354 aa).

Substrate is bound by residues 27–31 (RQAGR), Asp-77, Tyr-154, Thr-209, and His-327.

This sequence belongs to the uroporphyrinogen decarboxylase family. In terms of assembly, homodimer.

It is found in the cytoplasm. The catalysed reaction is uroporphyrinogen III + 4 H(+) = coproporphyrinogen III + 4 CO2. It functions in the pathway porphyrin-containing compound metabolism; protoporphyrin-IX biosynthesis; coproporphyrinogen-III from 5-aminolevulinate: step 4/4. Catalyzes the decarboxylation of four acetate groups of uroporphyrinogen-III to yield coproporphyrinogen-III. The polypeptide is Uroporphyrinogen decarboxylase (Escherichia coli O6:K15:H31 (strain 536 / UPEC)).